A 229-amino-acid polypeptide reads, in one-letter code: uncharacterized protein (229 aa).

A signal peptide spans 1 to 26 (MSRNDARYLRCTAALGAAFFACGAAA).

It belongs to the OmpW/AlkL family.

The protein resides in the cell outer membrane. This is an uncharacterized protein from Sinorhizobium fredii (strain NBRC 101917 / NGR234).